The chain runs to 292 residues: MFNRIFLFLLTNVAVLMLAGVVMSVLGVNPAQMSGLLVMAAIFGFGGSFISLLLSKFMAKRSTGAQVITEPRTPTERWLLETVRRQAQAAGIGMPEVAVYDGPEINAFATGANRNNALVAVSTGLLQHMDQDEAEAVLGHEIAHVANGDMVTMALLQGVLNTFVIVLARVVGGIIDSAVSGNRDSGRGFAYYIIVFALEMVFGMFATMIAMWFSRRREFRADAGGAQLAGRSKMIAALERLSLNHGQNTLPSQVQAFGISGGVGDGLRRLFLSHPPLTERIAALRAANGTAM.

A run of 2 helical transmembrane segments spans residues 5–25 (IFLFLLTNVAVLMLAGVVMSV) and 34–54 (SGLLVMAAIFGFGGSFISLLL). His140 contributes to the Zn(2+) binding site. Residue Glu141 is part of the active site. Position 144 (His144) interacts with Zn(2+). Helical transmembrane passes span 155-175 (LLQGVLNTFVIVLARVVGGII) and 193-213 (IIVFALEMVFGMFATMIAMWF). Glu218 is a binding site for Zn(2+).

The protein belongs to the peptidase M48B family. It depends on Zn(2+) as a cofactor.

The protein localises to the cell inner membrane. This chain is Protease HtpX, found in Xanthomonas oryzae pv. oryzae (strain PXO99A).